The chain runs to 246 residues: 1-(5-phosphoribosyl)-5-[(5-phosphoribosylamino)methylideneamino] imidazole-4-carboxamide isomerase (246 aa).

D8 (proton acceptor) is an active-site residue. D131 functions as the Proton donor in the catalytic mechanism.

The protein belongs to the HisA/HisF family.

It localises to the cytoplasm. It carries out the reaction 1-(5-phospho-beta-D-ribosyl)-5-[(5-phospho-beta-D-ribosylamino)methylideneamino]imidazole-4-carboxamide = 5-[(5-phospho-1-deoxy-D-ribulos-1-ylimino)methylamino]-1-(5-phospho-beta-D-ribosyl)imidazole-4-carboxamide. The protein operates within amino-acid biosynthesis; L-histidine biosynthesis; L-histidine from 5-phospho-alpha-D-ribose 1-diphosphate: step 4/9. This Polaromonas sp. (strain JS666 / ATCC BAA-500) protein is 1-(5-phosphoribosyl)-5-[(5-phosphoribosylamino)methylideneamino] imidazole-4-carboxamide isomerase.